Reading from the N-terminus, the 307-residue chain is 4-hydroxythreonine-4-phosphate dehydrogenase (307 aa).

The substrate site is built by H121 and T122. The a divalent metal cation site is built by H150, H189, and H246. Substrate contacts are provided by K254, N263, and R272.

Belongs to the PdxA family. As to quaternary structure, homodimer. Zn(2+) is required as a cofactor. Requires Mg(2+) as cofactor. It depends on Co(2+) as a cofactor.

Its subcellular location is the cytoplasm. It carries out the reaction 4-(phosphooxy)-L-threonine + NAD(+) = 3-amino-2-oxopropyl phosphate + CO2 + NADH. The protein operates within cofactor biosynthesis; pyridoxine 5'-phosphate biosynthesis; pyridoxine 5'-phosphate from D-erythrose 4-phosphate: step 4/5. Catalyzes the NAD(P)-dependent oxidation of 4-(phosphooxy)-L-threonine (HTP) into 2-amino-3-oxo-4-(phosphooxy)butyric acid which spontaneously decarboxylates to form 3-amino-2-oxopropyl phosphate (AHAP). The protein is 4-hydroxythreonine-4-phosphate dehydrogenase of Campylobacter fetus subsp. fetus (strain 82-40).